The following is a 754-amino-acid chain: Glutathione biosynthesis bifunctional protein GshAB (754 aa).

A glutamate--cysteine ligase region spans residues 1–333 (MHINQLLQHA…KAQKLNDKIA (333 aa)). The 264-residue stretch at 489–752 (KKILRENGYP…LAKLFPEIST (264 aa)) folds into the ATP-grasp domain. 516–574 (SQIKNKPIVVKPKTTNFGLGISIFETAASHNDYEKALDIAFIEDYSVLVEEFIPGTEYR) contributes to the ATP binding site. Asp696, Glu717, and Asn719 together coordinate Mg(2+). Mn(2+) contacts are provided by Asp696, Glu717, and Asn719.

It in the N-terminal section; belongs to the glutamate--cysteine ligase type 1 family. Type 2 subfamily. As to quaternary structure, monomer. Requires Mg(2+) as cofactor. Mn(2+) is required as a cofactor.

It catalyses the reaction L-cysteine + L-glutamate + ATP = gamma-L-glutamyl-L-cysteine + ADP + phosphate + H(+). The catalysed reaction is gamma-L-glutamyl-L-cysteine + glycine + ATP = glutathione + ADP + phosphate + H(+). It participates in sulfur metabolism; glutathione biosynthesis; glutathione from L-cysteine and L-glutamate: step 1/2. Its pathway is sulfur metabolism; glutathione biosynthesis; glutathione from L-cysteine and L-glutamate: step 2/2. Its function is as follows. Synthesizes glutathione from L-glutamate and L-cysteine via gamma-L-glutamyl-L-cysteine. In Streptococcus mutans serotype c (strain ATCC 700610 / UA159), this protein is Glutathione biosynthesis bifunctional protein GshAB.